Reading from the N-terminus, the 410-residue chain is Peptidase T (410 aa).

Zn(2+) is bound at residue H79. D81 is a catalytic residue. D142 contacts Zn(2+). E176 serves as the catalytic Proton acceptor. E177, D199, and H381 together coordinate Zn(2+).

It belongs to the peptidase M20B family. Zn(2+) is required as a cofactor.

The protein resides in the cytoplasm. It catalyses the reaction Release of the N-terminal residue from a tripeptide.. In terms of biological role, cleaves the N-terminal amino acid of tripeptides. The polypeptide is Peptidase T (pepT) (Bacillus subtilis (strain 168)).